Consider the following 317-residue polypeptide: SWI/SNF-related matrix-associated actin-dependent regulator of chromatin subfamily E member 1-related (317 aa).

The segment covering 1 to 17 (MSHGPKQPGAAAAPAGG) has biased composition (low complexity). Residues 1 to 71 (MSHGPKQPGA…RKKILPNGPK (71 aa)) are disordered. Lys-31 participates in a covalent cross-link: Glycyl lysine isopeptide (Lys-Gly) (interchain with G-Cter in SUMO2). Positions 31-52 (KQERGEGPRAGEKGSHEEEPVK) are enriched in basic and acidic residues. Residues 53-65 (KRGWPKGKKRKKI) are compositionally biased toward basic residues. A DNA-binding region (HMG box) is located at residues 70-138 (PKAPVTGYVR…QYMKELRAYQ (69 aa)). Ser-160 carries the post-translational modification Phosphoserine. The stretch at 190–257 (EEFLDQNKAR…LQQQLQAVRQ (68 aa)) forms a coiled coil.

In terms of assembly, component of a BHC histone deacetylase complex that contains HDAC1, HDAC2, HMG20B/BRAF35, KDM1A, RCOR1/CoREST and PHF21A/BHC80. The BHC complex may also contain ZMYM2, ZNF217, ZMYM3, GSE1 and GTF2I. Interacts with the BRCA2 tumor suppressor protein. Interacts with DTNB. In terms of tissue distribution, ubiquitously expressed in adult tissues.

The protein localises to the nucleus. It localises to the chromosome. Required for correct progression through G2 phase of the cell cycle and entry into mitosis. Required for RCOR1/CoREST mediated repression of neuronal specific gene promoters. In Homo sapiens (Human), this protein is SWI/SNF-related matrix-associated actin-dependent regulator of chromatin subfamily E member 1-related (HMG20B).